A 261-amino-acid polypeptide reads, in one-letter code: Imidazole glycerol phosphate synthase subunit HisF (261 aa).

Catalysis depends on residues Asp-11 and Asp-130.

The protein belongs to the HisA/HisF family. Heterodimer of HisH and HisF.

It is found in the cytoplasm. The catalysed reaction is 5-[(5-phospho-1-deoxy-D-ribulos-1-ylimino)methylamino]-1-(5-phospho-beta-D-ribosyl)imidazole-4-carboxamide + L-glutamine = D-erythro-1-(imidazol-4-yl)glycerol 3-phosphate + 5-amino-1-(5-phospho-beta-D-ribosyl)imidazole-4-carboxamide + L-glutamate + H(+). It participates in amino-acid biosynthesis; L-histidine biosynthesis; L-histidine from 5-phospho-alpha-D-ribose 1-diphosphate: step 5/9. IGPS catalyzes the conversion of PRFAR and glutamine to IGP, AICAR and glutamate. The HisF subunit catalyzes the cyclization activity that produces IGP and AICAR from PRFAR using the ammonia provided by the HisH subunit. This Limosilactobacillus fermentum (strain NBRC 3956 / LMG 18251) (Lactobacillus fermentum) protein is Imidazole glycerol phosphate synthase subunit HisF.